Consider the following 323-residue polypeptide: MSSLPPAIFLMGPTASGKTDLALELARVLPCELISVDSALVYRGMDIGTAKPSADVLAQFPHRLVDILDPAESYSAAEFSSDALAAMAEITAAGRIPLLVGGTMLYFKALQEGLADMPAADASVRAELEALAASEGLQVLHDRLAQVDPESAARIHPNDPQRLVRALEVYCVSGLTMSEHRARQRSQKAGPDAPGSGVLPYTVAQLCIAPAQRHILHERIERRFRHMVEQGFVEEVEALRSRGDLHLGMPSIRAVGYRQVWEYLDGSSTREEMVERGIIATRQLAKRQFTWLRSWGEVHWLDSLSCDNLPRALKYLQSLSILS.

12 to 19 provides a ligand contact to ATP; the sequence is GPTASGKT. 14-19 contributes to the substrate binding site; sequence TASGKT. Interaction with substrate tRNA stretches follow at residues 37–40 and 161–165; these read DSAL and QRLVR.

The protein belongs to the IPP transferase family. As to quaternary structure, monomer. The cofactor is Mg(2+).

The catalysed reaction is adenosine(37) in tRNA + dimethylallyl diphosphate = N(6)-dimethylallyladenosine(37) in tRNA + diphosphate. In terms of biological role, catalyzes the transfer of a dimethylallyl group onto the adenine at position 37 in tRNAs that read codons beginning with uridine, leading to the formation of N6-(dimethylallyl)adenosine (i(6)A). The protein is tRNA dimethylallyltransferase of Stutzerimonas stutzeri (strain A1501) (Pseudomonas stutzeri).